A 448-amino-acid chain; its full sequence is Exodeoxyribonuclease 7 large subunit (448 aa).

It belongs to the XseA family. In terms of assembly, heterooligomer composed of large and small subunits.

Its subcellular location is the cytoplasm. The catalysed reaction is Exonucleolytic cleavage in either 5'- to 3'- or 3'- to 5'-direction to yield nucleoside 5'-phosphates.. In terms of biological role, bidirectionally degrades single-stranded DNA into large acid-insoluble oligonucleotides, which are then degraded further into small acid-soluble oligonucleotides. The sequence is that of Exodeoxyribonuclease 7 large subunit from Histophilus somni (strain 129Pt) (Haemophilus somnus).